A 380-amino-acid chain; its full sequence is Asporin (380 aa).

An N-terminal signal peptide occupies residues 1–14 (MKEYVLLLFLALCS). Positions 15 to 32 (AKPFFSPSHIALKNMMLK) are excised as a propeptide. The segment covering 35 to 54 (EDTDDDDDDDDDDDDDDEDN) has biased composition (acidic residues). The segment at 35 to 59 (EDTDDDDDDDDDDDDDDEDNSLFPT) is disordered. The O-linked (GalNAc...) serine glycan is linked to Ser-55. The LRRNT domain occupies 66–102 (FFPFDLFPMCPFGCQCYSRVVHCSDLGLTSVPTNIPF). Cystine bridges form between Cys-75–Cys-81 and Cys-79–Cys-88. LRR repeat units lie at residues 103–124 (DTRM…DFKG), 127–148 (SLYG…AFLT), 151–173 (KLRR…PKSL), 174–193 (AELR…TFKG), 196–219 (ALHV…AFEG), 242–263 (TLLE…DFKR), 266–287 (ELQR…SLAN), 290–312 (RVRE…PELK), 313–334 (YLQI…DFCP), 335–357 (TVPK…VKYW), and 358–380 (EMQP…NFGM). The interval 166–212 (PLNLPKSLAELRIHENKVKKIQKDTFKGMNALHVLEMSANPLDNNGI) is interaction with TGFB1. N-linked (GlcNAc...) asparagine glycosylation occurs at Asn-282. An intrachain disulfide couples Cys-333 to Cys-366.

It belongs to the small leucine-rich proteoglycan (SLRP) family. SLRP class I subfamily. In terms of assembly, interacts with TGFB1, TGFB2 and TGFB3. DCN, BGN, and FMOD inhibit binding to TGFB1. Interacts with BMP2. Interacts in vitro with type II collagen. Interacts with type I collagen. DCN can inhibit collagen binding. In terms of processing, there is no serine/glycine dipeptide sequence expected for the attachment of O-linked glycosaminoglycans and this is probably not a proteoglycan. The O-linked polysaccharide on 54-Ser is probably the mucin type linked to GalNAc. The N-linked glycan at Asn-282 is composed of variable structures of GlcNAc, mannose, fucose, HexNAc and hexose. Higher levels in osteoarthritic articular cartilage, aorta, uterus. Moderate expression in small intestine, heart, liver, bladder, ovary, stomach, and in the adrenal, thyroid, and mammary glands. Low expression in trachea, bone marrow, and lung. Colocalizes with TGFB1 in chondrocytes within osteoarthritic (OA) lesions of articular cartilage.

It is found in the secreted. The protein localises to the extracellular space. Its subcellular location is the extracellular matrix. Functionally, negatively regulates periodontal ligament (PDL) differentiation and mineralization to ensure that the PDL is not ossified and to maintain homeostasis of the tooth-supporting system. Inhibits BMP2-induced cytodifferentiation of PDL cells by preventing its binding to BMPR1B/BMP type-1B receptor, resulting in inhibition of BMP-dependent activation of SMAD proteins. Critical regulator of TGF-beta in articular cartilage and plays an essential role in cartilage homeostasis and osteoarthritis (OA) pathogenesis. Negatively regulates chondrogenesis in the articular cartilage by blocking the TGF-beta/receptor interaction on the cell surface and inhibiting the canonical TGF-beta/Smad signal. Binds calcium and plays a role in osteoblast-driven collagen biomineralization activity. The sequence is that of Asporin (ASPN) from Homo sapiens (Human).